A 95-amino-acid chain; its full sequence is Aspartyl/glutamyl-tRNA(Asn/Gln) amidotransferase subunit C (95 aa).

The disordered stretch occupies residues 51–95; sequence PTSHATLTSSRLREDVTRPSLPPEKSLANAPAKSDTSFAVPKIIE.

This sequence belongs to the GatC family. In terms of assembly, heterotrimer of A, B and C subunits.

It catalyses the reaction L-glutamyl-tRNA(Gln) + L-glutamine + ATP + H2O = L-glutaminyl-tRNA(Gln) + L-glutamate + ADP + phosphate + H(+). It carries out the reaction L-aspartyl-tRNA(Asn) + L-glutamine + ATP + H2O = L-asparaginyl-tRNA(Asn) + L-glutamate + ADP + phosphate + 2 H(+). Its function is as follows. Allows the formation of correctly charged Asn-tRNA(Asn) or Gln-tRNA(Gln) through the transamidation of misacylated Asp-tRNA(Asn) or Glu-tRNA(Gln) in organisms which lack either or both of asparaginyl-tRNA or glutaminyl-tRNA synthetases. The reaction takes place in the presence of glutamine and ATP through an activated phospho-Asp-tRNA(Asn) or phospho-Glu-tRNA(Gln). This chain is Aspartyl/glutamyl-tRNA(Asn/Gln) amidotransferase subunit C, found in Myxococcus xanthus (strain DK1622).